The chain runs to 1679 residues: AF4/FMR2 family member lilli (1679 aa).

8 disordered regions span residues 1–21 (MAQQ…SSIN), 55–78 (NYNM…QQGI), 124–305 (RSAP…EKDV), 406–539 (LHQL…GAQN), 580–609 (MGAG…SNKW), 733–755 (DSGT…AVGG), 783–1172 (QPTQ…TTPH), and 1197–1319 (TPAQ…LQIG). Positions 69–78 (REKIERQQGI) are enriched in basic and acidic residues. 2 stretches are compositionally biased toward low complexity: residues 144 to 181 (SLGH…QQQQ) and 212 to 244 (PSSS…SSGG). Thr421 carries the phosphothreonine modification. The segment covering 429–442 (LKTEKNHSLEKQDS) has biased composition (basic and acidic residues). Residues 444 to 455 (LENDLELSESED) are compositionally biased toward acidic residues. A phosphoserine mark is found at Ser451 and Ser453. Over residues 464–484 (SAGNSSNSSESDSSESGSESS) the composition is skewed to low complexity. The span at 492–501 (HPNHQQHHHQ) shows a compositional bias: basic residues. Low complexity predominate over residues 502–532 (LQQQQQQQQQQASMQQQQVLQQQQQHRPQPL). Residues 582-591 (AGSGSGGTLS) show a composition bias toward gly residues. Positions 598–609 (NKTPSPTESNKW) are enriched in polar residues. Residues 733-752 (DSGTSASGSSSSSSSSSDSA) show a composition bias toward low complexity. Residues 783–796 (QPTQSQKAPPSNSV) show a composition bias toward polar residues. Basic residues predominate over residues 810-820 (QRQKKPRKKKA). Ser829 and Ser830 each carry phosphoserine. The segment at residues 859 to 871 (KKGRGRPRKQQQS) is a DNA-binding region (a.T hook). Over residues 868–906 (QQQSGGSGNLSSASAGSSSQTKGPTLTAAKKPLAKTPLA) the composition is skewed to low complexity. Phosphoserine occurs at positions 879 and 881. Polar residues predominate over residues 917–927 (SQSSSNGNTPT). Low complexity-rich tracts occupy residues 957–973 (SSSA…SSSS) and 1001–1012 (GSGSSSPSSSGS). Polar residues predominate over residues 1019–1030 (TRSQVGSGQALA). Residues 1042–1068 (SQHSQHLSSSECSSSSGGCTAVCSSSS) show a composition bias toward low complexity. Residues 1073 to 1090 (EGRREKERERKPKSDKNK) are compositionally biased toward basic and acidic residues. Pro residues predominate over residues 1130–1140 (QPPPPQAPPAA). Polar residues predominate over residues 1198–1213 (PAQQNGHLTPKDQATN). 2 stretches are compositionally biased toward basic and acidic residues: residues 1234–1251 (EHPV…EAKF) and 1260–1288 (FQLK…EQPP). Ser1368 is modified (phosphoserine). A Phosphothreonine modification is found at Thr1370. A compositionally biased stretch (low complexity) spans 1569 to 1589 (GNTPSSISPSNSVGSQGSGSN). The disordered stretch occupies residues 1569–1594 (GNTPSSISPSNSVGSQGSGSNTPPGR).

It belongs to the AF4 family.

It is found in the nucleus. In terms of biological role, has a role in transcriptional regulation. Acts in parallel with the Ras/MAPK and the PI3K/PKB pathways in the control of cell identity and cellular growth. Essential for regulation of the cytoskeleton and cell growth but not for cell proliferation or growth rate. Required specifically for the microtubule-based basal transport of lipid droplets. Plays a partially redundant function downstream of Raf in cell fate specification in the developing eye. Pair-rule protein that regulates embryonic cellularization, gastrulation and segmentation. The protein is AF4/FMR2 family member lilli of Drosophila erecta (Fruit fly).